Reading from the N-terminus, the 45-residue chain is uncharacterized protein (45 aa).

A compositionally biased stretch (basic and acidic residues) spans 1–26; it reads MIMGKDRQEKKLKASGRVESDRDQSI. Positions 1 to 45 are disordered; sequence MIMGKDRQEKKLKASGRVESDRDQSIHYDGATSLEQNGRFKKRKS.

This is an uncharacterized protein from Bacillus subtilis (strain 168).